Here is a 245-residue protein sequence, read N- to C-terminus: 1-(5-phosphoribosyl)-5-[(5-phosphoribosylamino)methylideneamino] imidazole-4-carboxamide isomerase (245 aa).

The active-site Proton acceptor is the aspartate 8. Aspartate 131 acts as the Proton donor in catalysis.

Belongs to the HisA/HisF family.

The protein resides in the cytoplasm. The catalysed reaction is 1-(5-phospho-beta-D-ribosyl)-5-[(5-phospho-beta-D-ribosylamino)methylideneamino]imidazole-4-carboxamide = 5-[(5-phospho-1-deoxy-D-ribulos-1-ylimino)methylamino]-1-(5-phospho-beta-D-ribosyl)imidazole-4-carboxamide. It participates in amino-acid biosynthesis; L-histidine biosynthesis; L-histidine from 5-phospho-alpha-D-ribose 1-diphosphate: step 4/9. The chain is 1-(5-phosphoribosyl)-5-[(5-phosphoribosylamino)methylideneamino] imidazole-4-carboxamide isomerase from Verminephrobacter eiseniae (strain EF01-2).